The sequence spans 154 residues: uncharacterized protein (154 aa).

The protein resides in the mitochondrion. This is an uncharacterized protein from Vicia faba (Broad bean).